Reading from the N-terminus, the 486-residue chain is MTLTIYNTLTRQKEPFEPLEPGKVRMYCCGITVYDYCHLGHARTCLVWDVVRRYLQWRGYQVQYIQNFTDIDDKILNRARKEGTSMEDVSERFIKAYFEDMDRLHIQKADAYPRATHTLDGIKRLVYELEQKGYAYPADGDVYYSVRSFSDYGKLSGRKLEDLQAGASGRVDLEDSESQKKKDPFDFALWKAAKPGEPSWESPWGLGRPGWHIECSAMVRERLGETIDIHVGGSDLIFPHHENEIAQSEAATGKPLARYWMHNGMVKVGGEKMSKSLGNFTTIRDLLAQFDPMAVRLFILQTHYRNPLDFTPKALEAATNGWQTLQEGLLFGYLFGEKLGWDQLSSNSSVREDNPLVQQFQDAVDDDFNFAGGLAVLFEIAKDLRKEGNILVHQEKTETSPEKLKEQWQTLVQLSQVLGLEAHPPQVHRETTDGLTDAEIETLIEQRTQARKAKNFAEGDRIRDDLKAKGITLIDQSGGITKWHRS.

Zn(2+) is bound at residue Cys29. The short motif at 31 to 41 is the 'HIGH' region element; it reads ITVYDYCHLGH. 3 residues coordinate Zn(2+): Cys215, His240, and Glu244. The 'KMSKS' region signature appears at 272–276; that stretch reads KMSKS. Residue Lys275 coordinates ATP.

This sequence belongs to the class-I aminoacyl-tRNA synthetase family. As to quaternary structure, monomer. Zn(2+) is required as a cofactor.

The protein resides in the cytoplasm. It catalyses the reaction tRNA(Cys) + L-cysteine + ATP = L-cysteinyl-tRNA(Cys) + AMP + diphosphate. This chain is Cysteine--tRNA ligase, found in Gloeothece citriformis (strain PCC 7424) (Cyanothece sp. (strain PCC 7424)).